A 193-amino-acid chain; its full sequence is Recombination protein RecR (193 aa).

The C4-type; degenerate zinc-finger motif lies at 61-76; that stretch reads CASCNALSETEVSEIC. Residues 84–170 enclose the Toprim domain; sequence SQLCMVLHPR…TFTKIAQGVP (87 aa).

Belongs to the RecR family.

Functionally, may play a role in DNA repair. It seems to be involved in an RecBC-independent recombinational process of DNA repair. It may act with RecF and RecO. The chain is Recombination protein RecR from Helicobacter pylori (strain J99 / ATCC 700824) (Campylobacter pylori J99).